The sequence spans 62 residues: UPF0434 protein RSc2531 (62 aa).

The protein belongs to the UPF0434 family.

This Ralstonia nicotianae (strain ATCC BAA-1114 / GMI1000) (Ralstonia solanacearum) protein is UPF0434 protein RSc2531.